We begin with the raw amino-acid sequence, 87 residues long: Small ribosomal subunit protein uS17 (87 aa).

This sequence belongs to the universal ribosomal protein uS17 family. Part of the 30S ribosomal subunit.

Its function is as follows. One of the primary rRNA binding proteins, it binds specifically to the 5'-end of 16S ribosomal RNA. This is Small ribosomal subunit protein uS17 from Heliobacterium modesticaldum (strain ATCC 51547 / Ice1).